The sequence spans 184 residues: Bifunctional protein PyrR (184 aa).

Positions 99–111 (IVLVDDVLYTGRT) match the PRPP-binding motif.

This sequence belongs to the purine/pyrimidine phosphoribosyltransferase family. PyrR subfamily. Homodimer and homohexamer; in equilibrium.

It catalyses the reaction UMP + diphosphate = 5-phospho-alpha-D-ribose 1-diphosphate + uracil. Its function is as follows. Regulates transcriptional attenuation of the pyrimidine nucleotide (pyr) operon by binding in a uridine-dependent manner to specific sites on pyr mRNA. This disrupts an antiterminator hairpin in the RNA and favors formation of a downstream transcription terminator, leading to a reduced expression of downstream genes. Functionally, also displays a weak uracil phosphoribosyltransferase activity which is not physiologically significant. The polypeptide is Bifunctional protein PyrR (Acetivibrio thermocellus (strain ATCC 27405 / DSM 1237 / JCM 9322 / NBRC 103400 / NCIMB 10682 / NRRL B-4536 / VPI 7372) (Clostridium thermocellum)).